A 498-amino-acid chain; its full sequence is Probable dipeptidase B (498 aa).

Residue C26 is part of the active site.

This sequence belongs to the peptidase C69 family.

It carries out the reaction an L-aminoacyl-L-amino acid + H2O = 2 an L-alpha-amino acid. The polypeptide is Probable dipeptidase B (pepDB) (Streptococcus pyogenes serotype M1).